The following is an 804-amino-acid chain: MRALWVLGLCCVLLTFGSVRAEDEVDVDGTVEEDLGKSREGSRTDDEVVQREEEAIQLDGLNASQIRELREKSEKFAFQAEVNRMMKLIINSLYKNKEIFLRELISNASDALDKIRLISLTDENALAGNEELTVKIKCDKEKNLLHVTDTGVGMTREELVKNLGTIAKSGTSEFLNKMAEAQEDGQSTSELIGQFGVGFYSAFLVADKVIVTSKHNNDTQHIWESDSNEFSVIADPRGNTLGRGTTITLVLKEEASDYLELDTIKNLVKKYSQFINFPIYVWSSKTETVEEPMEEEEAAKEEKEESDDEAAVEEEEEEKKPKTKKVEKTVWDWELMNDIKPIWQRPSKEVEDDEYKAFYKSFSKESDDPMAYIHFTAEGEVTFKSILFVPTSAPRGLFDEYGSKKSDYIKLYVRRVFITDDFHDMMPKYLNFVKGVVDSDDLPLNVSRETLQQHKLLKVIRKKLVRKTLDMIKKIADEKYNDTFWKEFGTNIKLGVIEDHSNRTRLAKLLRFQSSHHPSDITSLDQYVERMKEKQDKIYFMAGSSRKEAESSPFVERLLKKGYEVIYLTEPVDEYCIQALPEFDGKRFQNVAKEGVKFDESEKSKENREAVEKEFEPLLNWMKDKALKDKIEKAVVSQRLTESPCALVASQYGWSGNMERIMKAQAYQTGKDISTNYYASQKKTFEINPRHPLIRDMLRRVKEDEDDKTVSDLAVVLFETATLRSGYLLPDTKAYGDRIERMLRLSLNIDPDAKVEEEPEEEPEETTEDTTEDTEQDDDEEMDAGADEEEQETSETSTAEKDEL.

Residues 1 to 21 (MRALWVLGLCCVLLTFGSVRA) form the signal peptide. Positions 42 to 44 (SRT) match the SRT pseudosubstrate motif motif. The N-linked (GlcNAc...) asparagine glycan is linked to N62. S64 is modified (phosphoserine). N107 is a glycosylation site (N-linked (GlcNAc...) asparagine). ATP-binding residues include N107, D149, and N162. Position 168 is an N6-(2-hydroxyisobutyryl)lysine (K168). Residue S172 is modified to Phosphoserine. ATP is bound at residue F199. N217 carries N-linked (GlcNAc...) asparagine glycosylation. The segment at 288-323 (TVEEPMEEEEAAKEEKEESDDEAAVEEEEEEKKPKT) is disordered. A compositionally biased stretch (acidic residues) spans 289–317 (VEEPMEEEEAAKEEKEESDDEAAVEEEEE). 2 positions are modified to phosphoserine: S306 and S403. K404 carries the post-translational modification N6-succinyllysine. N445 carries an N-linked (GlcNAc...) asparagine glycan. Phosphoserine is present on S447. K479 carries the N6-acetyllysine modification. N481 and N502 each carry an N-linked (GlcNAc...) asparagine glycan. K633 carries the N6-succinyllysine modification. A disordered region spans residues 750 to 804 (DPDAKVEEEPEEEPEETTEDTTEDTEQDDDEEMDAGADEEEQETSETSTAEKDEL). A compositionally biased stretch (acidic residues) spans 757–793 (EEPEEEPEETTEDTTEDTEQDDDEEMDAGADEEEQET). The short motif at 801 to 804 (KDEL) is the Prevents secretion from ER element.

The protein belongs to the heat shock protein 90 family. Homodimer; disulfide-linked. Component of an EIF2 complex at least composed of CELF1/CUGBP1, CALR, CALR3, EIF2S1, EIF2S2, HSP90B1 and HSPA5. Part of a large chaperone multiprotein complex comprising DNAJB11, HSP90B1, HSPA5, HYOU, PDIA2, PDIA4, PDIA6, PPIB, SDF2L1, UGGT1 and very small amounts of ERP29, but not, or at very low levels, CALR nor CANX. Interacts with AIMP1; regulates its retention in the endoplasmic reticulum. Hyperglycosylated form interacts with OS9; promoting its degradation by the endoplasmic reticulum associated degradation (ERAD). Interacts with CNPY3. This interaction is disrupted in the presence of ATP. Interacts with TLR4 and TLR9, but not with TLR3. Interacts with MZB1 in a calcium-dependent manner. Interacts with METTL23. Interacts with IL1B; the interaction facilitates cargo translocation into the ERGIC. Interacts with EIF2AK3. In terms of processing, phosphorylated by CK2. N-glycosylated cotranslationally at Asn-217 by STT3A-containing OST-A complex: this glycosylation is constitutive. In response to various stress, 5 additional facultative sites (Asn-62, Asn-107, Asn-445, Asn-481 and Asn-502) can be glycosylated post-translationally by STT3B-containing OST-B complex, leading to a hyperglycosylated form that is degraded by the ER-associated degradation (ERAD) pathway. In normal conditions, the OST-A complex together with CCDC134 prevent glycosylation at facultative sites during protein folding, thereby preventing hyperglycosylation. Mechanistically, nascent HSP90B1 is tethered during translation to a specialized CCDC134-containing translocon that forms a microenvironment for its folding, in which STT3A associates with the SRT pseudosubstrate motif, and prevents access to facultative glycosylation sites until folding is completed, rendering its facultative sites inaccessible to the OST-B complex.

It is found in the endoplasmic reticulum lumen. It localises to the sarcoplasmic reticulum lumen. Its subcellular location is the melanosome. The catalysed reaction is ATP + H2O = ADP + phosphate + H(+). Functionally, ATP-dependent chaperone involved in the processing of proteins in the endoplasmic reticulum, regulating their transport. Together with MESD, acts as a modulator of the Wnt pathway by promoting the folding of LRP6, a coreceptor of the canonical Wnt pathway. When associated with CNPY3, required for proper folding of Toll-like receptors. Promotes folding and trafficking of TLR4 to the cell surface. May participate in the unfolding of cytosolic leaderless cargos (lacking the secretion signal sequence) such as the interleukin 1/IL-1 to facilitate their translocation into the ERGIC (endoplasmic reticulum-Golgi intermediate compartment) and secretion; the translocation process is mediated by the cargo receptor TMED10. The sequence is that of Endoplasmin (HSP90B1) from Sus scrofa (Pig).